Consider the following 507-residue polypeptide: ATP synthase subunit alpha, chloroplastic (507 aa).

170 to 177 (GDRQTGKT) serves as a coordination point for ATP.

Belongs to the ATPase alpha/beta chains family. In terms of assembly, F-type ATPases have 2 components, CF(1) - the catalytic core - and CF(0) - the membrane proton channel. CF(1) has five subunits: alpha(3), beta(3), gamma(1), delta(1), epsilon(1). CF(0) has four main subunits: a, b, b' and c.

It localises to the plastid. The protein resides in the chloroplast thylakoid membrane. The catalysed reaction is ATP + H2O + 4 H(+)(in) = ADP + phosphate + 5 H(+)(out). Produces ATP from ADP in the presence of a proton gradient across the membrane. The alpha chain is a regulatory subunit. This chain is ATP synthase subunit alpha, chloroplastic, found in Oryza nivara (Indian wild rice).